Consider the following 467-residue polypeptide: Siroheme synthase (467 aa).

Residues 1–203 (METLPIFMKL…GQEEAARHAM (203 aa)) are precorrin-2 dehydrogenase /sirohydrochlorin ferrochelatase. NAD(+) is bound by residues 22–23 (EI) and 43–44 (PE). A Phosphoserine modification is found at Ser-128. The tract at residues 216 to 467 (GEVYLVGGGP…APSPEVVSAG (252 aa)) is uroporphyrinogen-III C-methyltransferase. Pro-225 serves as a coordination point for S-adenosyl-L-methionine. The active-site Proton acceptor is Asp-248. The Proton donor role is filled by Lys-270. S-adenosyl-L-methionine contacts are provided by residues 301-303 (GGD), Ile-306, 331-332 (TA), Met-383, and Gly-412.

The protein in the N-terminal section; belongs to the precorrin-2 dehydrogenase / sirohydrochlorin ferrochelatase family. This sequence in the C-terminal section; belongs to the precorrin methyltransferase family.

The enzyme catalyses uroporphyrinogen III + 2 S-adenosyl-L-methionine = precorrin-2 + 2 S-adenosyl-L-homocysteine + H(+). The catalysed reaction is precorrin-2 + NAD(+) = sirohydrochlorin + NADH + 2 H(+). It carries out the reaction siroheme + 2 H(+) = sirohydrochlorin + Fe(2+). The protein operates within cofactor biosynthesis; adenosylcobalamin biosynthesis; precorrin-2 from uroporphyrinogen III: step 1/1. It functions in the pathway cofactor biosynthesis; adenosylcobalamin biosynthesis; sirohydrochlorin from precorrin-2: step 1/1. It participates in porphyrin-containing compound metabolism; siroheme biosynthesis; precorrin-2 from uroporphyrinogen III: step 1/1. Its pathway is porphyrin-containing compound metabolism; siroheme biosynthesis; siroheme from sirohydrochlorin: step 1/1. The protein operates within porphyrin-containing compound metabolism; siroheme biosynthesis; sirohydrochlorin from precorrin-2: step 1/1. In terms of biological role, multifunctional enzyme that catalyzes the SAM-dependent methylations of uroporphyrinogen III at position C-2 and C-7 to form precorrin-2 via precorrin-1. Then it catalyzes the NAD-dependent ring dehydrogenation of precorrin-2 to yield sirohydrochlorin. Finally, it catalyzes the ferrochelation of sirohydrochlorin to yield siroheme. This is Siroheme synthase from Methylobacillus flagellatus (strain ATCC 51484 / DSM 6875 / VKM B-1610 / KT).